The chain runs to 364 residues: Peptide chain release factor 2 (364 aa).

Gln251 carries the N5-methylglutamine modification.

It belongs to the prokaryotic/mitochondrial release factor family. Post-translationally, methylated by PrmC. Methylation increases the termination efficiency of RF2.

It localises to the cytoplasm. In terms of biological role, peptide chain release factor 2 directs the termination of translation in response to the peptide chain termination codons UGA and UAA. The sequence is that of Peptide chain release factor 2 (prfB) from Buchnera aphidicola subsp. Schizaphis graminum (strain Sg).